Here is a 158-residue protein sequence, read N- to C-terminus: Inorganic pyrophosphatase (158 aa).

E8 is a Mg(2+) binding site. Residues K16, R30, and Y42 each contribute to the substrate site. Residues D52, D57, D84, and D89 each contribute to the Mg(2+) site. The Proton acceptor role is filled by D89. Y125 contributes to the substrate binding site.

This sequence belongs to the PPase family. Homohexamer. The cofactor is Mg(2+).

It is found in the cytoplasm. The enzyme catalyses diphosphate + H2O = 2 phosphate + H(+). Catalyzes the hydrolysis of inorganic pyrophosphate (PPi) forming two phosphate ions. This Corynebacterium glutamicum (strain ATCC 13032 / DSM 20300 / JCM 1318 / BCRC 11384 / CCUG 27702 / LMG 3730 / NBRC 12168 / NCIMB 10025 / NRRL B-2784 / 534) protein is Inorganic pyrophosphatase.